The following is a 328-amino-acid chain: MGAAAGDGREEEGVMATDFFWSYTDEPHATRRREILAKHPQIKELFGPDPLAFLKIAAVVSLQLWTATLLRDASWVKILTVAYFFGSFLNHNLFLAIHELSHNLAFTTPSYNRWLGIFANLPIGVPMSITFQKYHLEHHRFQGVDGIDMDIPSQAEAHAVKNTLSKSVWVVFQLFFYALRPLFLKPKPPGLWEFTNLIIQIALDASMVYFFGWKSLAYLILSTFVGGGMHPMAGHFISEHYVFNPDQETYSYYGPLNLMTWHVGYHNEHHDFPRIPGTRLYKVREIAPEYYNNLKSYKSWSQVIYMYIMDQTVGPFSRMKRKAPKKDS.

The next 3 helical transmembrane spans lie at 50-70, 78-98, and 114-134; these read PLAF…ATLL, ILTV…LAIH, and WLGI…FQKY. Positions 98–102 match the Histidine box-1 motif; it reads HELSH. A Histidine box-2 motif is present at residues 135–139; the sequence is HLEHH. The next 3 helical transmembrane spans lie at 164–184, 192–212, and 217–237; these read LSKS…PLFL, WEFT…YFFG, and AYLI…GHFI. The Histidine box-3 signature appears at 266-270; that stretch reads HNEHH.

It belongs to the fatty acid desaturase type 1 family. DEGS subfamily.

The protein localises to the endoplasmic reticulum membrane. The catalysed reaction is an N-acylsphinganine + 2 Fe(II)-[cytochrome b5] + O2 + 2 H(+) = an N-acylsphing-4-enine + 2 Fe(III)-[cytochrome b5] + 2 H2O. Its function is as follows. Sphingolipid-delta-4-desaturase required for the biosynthesis of delta-4-unsaturated sphingolipids and derivatives. The sequence is that of Sphingolipid delta(4)-desaturase DES1-like from Oryza sativa subsp. japonica (Rice).